Here is a 539-residue protein sequence, read N- to C-terminus: Putative S-adenosyl-L-methionine-dependent methyltransferase MAP_4079 (539 aa).

S-adenosyl-L-methionine-binding positions include Asp134 and 163–164 (DL). Residues 290 to 392 (AGYGRGRRRP…RGEPGERGGQ (103 aa)) are disordered. The span at 301–313 (SATSCRGTCSSPR) shows a compositional bias: polar residues. The segment covering 341–351 (HGFGNQCGGPD) has biased composition (gly residues).

The protein belongs to the UPF0677 family.

Functionally, exhibits S-adenosyl-L-methionine-dependent methyltransferase activity. The polypeptide is Putative S-adenosyl-L-methionine-dependent methyltransferase MAP_4079 (Mycolicibacterium paratuberculosis (strain ATCC BAA-968 / K-10) (Mycobacterium paratuberculosis)).